A 588-amino-acid chain; its full sequence is Aspartate--tRNA ligase (588 aa).

Residue E174 coordinates L-aspartate. The interval 198–201 (QLFK) is aspartate. R220 provides a ligand contact to L-aspartate. Residues 220 to 222 (RDE) and Q229 each bind ATP. H448 contacts L-aspartate. Position 482 (E482) interacts with ATP. R489 is an L-aspartate binding site. 534-537 (GIDR) is an ATP binding site.

It belongs to the class-II aminoacyl-tRNA synthetase family. Type 1 subfamily. As to quaternary structure, homodimer.

It is found in the cytoplasm. The enzyme catalyses tRNA(Asp) + L-aspartate + ATP = L-aspartyl-tRNA(Asp) + AMP + diphosphate. Catalyzes the attachment of L-aspartate to tRNA(Asp) in a two-step reaction: L-aspartate is first activated by ATP to form Asp-AMP and then transferred to the acceptor end of tRNA(Asp). In Xanthomonas oryzae pv. oryzae (strain PXO99A), this protein is Aspartate--tRNA ligase.